Reading from the N-terminus, the 307-residue chain is 2-dehydropantoate 2-reductase (307 aa).

Residues 7-12 (GSGAMG), N102, and A128 contribute to the NADP(+) site. Position 102 (N102) interacts with substrate. Residue K184 is the Proton donor of the active site. Residues N188, N192, and S255 each contribute to the substrate site. E268 contributes to the NADP(+) binding site.

It belongs to the ketopantoate reductase family.

The protein resides in the cytoplasm. It carries out the reaction (R)-pantoate + NADP(+) = 2-dehydropantoate + NADPH + H(+). It participates in cofactor biosynthesis; (R)-pantothenate biosynthesis; (R)-pantoate from 3-methyl-2-oxobutanoate: step 2/2. Functionally, catalyzes the NADPH-dependent reduction of ketopantoate into pantoic acid. The protein is 2-dehydropantoate 2-reductase (apbA) of Streptococcus pyogenes serotype M6 (strain ATCC BAA-946 / MGAS10394).